The sequence spans 338 residues: MNQEIIRQTPLWAENWPIAYAVVQAVVILLVVVLVAALMSFIERRLLAWWQDRYGPNRVGPGGMFQIVADMLKIMFKEDWTPKFADKLTFRLAPAVAMATAVLSFMVIPVSPALGVADMSIGLLFFMAMAGIAVYAVLFGGWSSNNKYSLLGGLRSAAQTISYEVFLGISLMGVVAIAGSFNLREIVEAQRDVWFIIPQFLGFLIFVVAGVAVTHRHPFDQPEAEQELAEGYHVEYGGMKWGMFFVAEYVNVVLISALIVTLFFGGWLAPFNLEIPFVPPVFWFVIKTAFFVMMFVLARGSLMRPRYDQVMNFGWKICLPLALVNLLVTGAVILMNQA.

Helical transmembrane passes span 22–42 (VVQAVVILLVVVLVAALMSFI), 96–116 (VAMATAVLSFMVIPVSPALGV), 121–141 (IGLLFFMAMAGIAVYAVLFGG), 161–181 (ISYEVFLGISLMGVVAIAGSF), 193–213 (VWFIIPQFLGFLIFVVAGVAV), 249–269 (YVNVVLISALIVTLFFGGWLA), 277–297 (FVPPVFWFVIKTAFFVMMFVL), and 315–335 (WKICLPLALVNLLVTGAVILM).

This sequence belongs to the complex I subunit 1 family. In terms of assembly, NDH-1 is composed of 14 different subunits. Subunits NuoA, H, J, K, L, M, N constitute the membrane sector of the complex.

It is found in the cell inner membrane. It catalyses the reaction a quinone + NADH + 5 H(+)(in) = a quinol + NAD(+) + 4 H(+)(out). Functionally, NDH-1 shuttles electrons from NADH, via FMN and iron-sulfur (Fe-S) centers, to quinones in the respiratory chain. The immediate electron acceptor for the enzyme in this species is believed to be ubiquinone. Couples the redox reaction to proton translocation (for every two electrons transferred, four hydrogen ions are translocated across the cytoplasmic membrane), and thus conserves the redox energy in a proton gradient. This subunit may bind ubiquinone. This Acinetobacter baumannii (strain ATCC 17978 / DSM 105126 / CIP 53.77 / LMG 1025 / NCDC KC755 / 5377) protein is NADH-quinone oxidoreductase subunit H.